Consider the following 617-residue polypeptide: 1-deoxy-D-xylulose-5-phosphate synthase (617 aa).

Thiamine diphosphate is bound by residues H76 and 117 to 119 (GHS). A Mg(2+)-binding site is contributed by D148. Thiamine diphosphate contacts are provided by residues 149 to 150 (GA), N177, Y285, and E366. N177 lines the Mg(2+) pocket.

Belongs to the transketolase family. DXPS subfamily. As to quaternary structure, homodimer. The cofactor is Mg(2+). Thiamine diphosphate serves as cofactor.

It carries out the reaction D-glyceraldehyde 3-phosphate + pyruvate + H(+) = 1-deoxy-D-xylulose 5-phosphate + CO2. The protein operates within metabolic intermediate biosynthesis; 1-deoxy-D-xylulose 5-phosphate biosynthesis; 1-deoxy-D-xylulose 5-phosphate from D-glyceraldehyde 3-phosphate and pyruvate: step 1/1. Catalyzes the acyloin condensation reaction between C atoms 2 and 3 of pyruvate and glyceraldehyde 3-phosphate to yield 1-deoxy-D-xylulose-5-phosphate (DXP). The protein is 1-deoxy-D-xylulose-5-phosphate synthase of Histophilus somni (strain 2336) (Haemophilus somnus).